The following is a 230-amino-acid chain: 2,3-bisphosphoglycerate-dependent phosphoglycerate mutase (230 aa).

Residues 10-17 (RHGESKWN), 23-24 (TG), R62, 89-92 (ERNY), K100, 116-117 (RR), and 185-186 (GN) each bind substrate. H11 functions as the Tele-phosphohistidine intermediate in the catalytic mechanism. The active-site Proton donor/acceptor is the E89.

This sequence belongs to the phosphoglycerate mutase family. BPG-dependent PGAM subfamily. As to quaternary structure, homodimer.

It catalyses the reaction (2R)-2-phosphoglycerate = (2R)-3-phosphoglycerate. It functions in the pathway carbohydrate degradation; glycolysis; pyruvate from D-glyceraldehyde 3-phosphate: step 3/5. Functionally, catalyzes the interconversion of 2-phosphoglycerate and 3-phosphoglycerate. The polypeptide is 2,3-bisphosphoglycerate-dependent phosphoglycerate mutase (Buchnera aphidicola subsp. Cinara cedri (strain Cc)).